A 730-amino-acid polypeptide reads, in one-letter code: Ribosomal RNA large subunit methyltransferase K/L (730 aa).

The THUMP domain maps to 46–157 (TAYRLCVWSR…RGEAILSLDL (112 aa)). The disordered stretch occupies residues 394–418 (GERREAQPEGTEARQQVPQASEPAR).

It belongs to the methyltransferase superfamily. RlmKL family.

The protein localises to the cytoplasm. The enzyme catalyses guanosine(2445) in 23S rRNA + S-adenosyl-L-methionine = N(2)-methylguanosine(2445) in 23S rRNA + S-adenosyl-L-homocysteine + H(+). It catalyses the reaction guanosine(2069) in 23S rRNA + S-adenosyl-L-methionine = N(2)-methylguanosine(2069) in 23S rRNA + S-adenosyl-L-homocysteine + H(+). Functionally, specifically methylates the guanine in position 2445 (m2G2445) and the guanine in position 2069 (m7G2069) of 23S rRNA. In Pseudomonas putida (strain ATCC 47054 / DSM 6125 / CFBP 8728 / NCIMB 11950 / KT2440), this protein is Ribosomal RNA large subunit methyltransferase K/L.